Consider the following 441-residue polypeptide: N-succinylarginine dihydrolase (441 aa).

Substrate is bound by residues 19-28, Asn-110, and 137-138; these read AGLSFGNEAS and HR. Glu-174 is an active-site residue. Arg-212 contributes to the substrate binding site. His-248 is an active-site residue. Substrate-binding residues include Asp-250 and Asn-359. The active-site Nucleophile is Cys-365.

Belongs to the succinylarginine dihydrolase family. As to quaternary structure, homodimer.

The catalysed reaction is N(2)-succinyl-L-arginine + 2 H2O + 2 H(+) = N(2)-succinyl-L-ornithine + 2 NH4(+) + CO2. Its pathway is amino-acid degradation; L-arginine degradation via AST pathway; L-glutamate and succinate from L-arginine: step 2/5. In terms of biological role, catalyzes the hydrolysis of N(2)-succinylarginine into N(2)-succinylornithine, ammonia and CO(2). The protein is N-succinylarginine dihydrolase of Erwinia tasmaniensis (strain DSM 17950 / CFBP 7177 / CIP 109463 / NCPPB 4357 / Et1/99).